We begin with the raw amino-acid sequence, 40 residues long: Photosystem II reaction center protein J (40 aa).

Residues 8–28 form a helical membrane-spanning segment; sequence IPLWLVGTVTGTLVIGLMGIF.

This sequence belongs to the PsbJ family. As to quaternary structure, PSII is composed of 1 copy each of membrane proteins PsbA, PsbB, PsbC, PsbD, PsbE, PsbF, PsbH, PsbI, PsbJ, PsbK, PsbL, PsbM, PsbT, PsbX, PsbY, PsbZ, Psb30/Ycf12, at least 3 peripheral proteins of the oxygen-evolving complex and a large number of cofactors. It forms dimeric complexes.

The protein resides in the plastid. It localises to the chloroplast thylakoid membrane. Functionally, one of the components of the core complex of photosystem II (PSII). PSII is a light-driven water:plastoquinone oxidoreductase that uses light energy to abstract electrons from H(2)O, generating O(2) and a proton gradient subsequently used for ATP formation. It consists of a core antenna complex that captures photons, and an electron transfer chain that converts photonic excitation into a charge separation. This Psilotum nudum (Whisk fern) protein is Photosystem II reaction center protein J.